Consider the following 245-residue polypeptide: Probable transcriptional regulatory protein pc1328 (245 aa).

Belongs to the TACO1 family.

It localises to the cytoplasm. The protein is Probable transcriptional regulatory protein pc1328 of Protochlamydia amoebophila (strain UWE25).